The primary structure comprises 393 residues: 2,3,4,5-tetrahydropyridine-2,6-dicarboxylate N-succinyltransferase (393 aa).

The active-site Acyl-anhydride intermediate is glutamate 261. Succinyl-CoA contacts are provided by residues arginine 263, glycine 278, serine 281, alanine 304, 319-320 (DA), glycine 327, lysine 356, and 369-372 (RQDS).

It belongs to the type 2 tetrahydrodipicolinate N-succinyltransferase family. As to quaternary structure, homotrimer.

Its subcellular location is the cytoplasm. It catalyses the reaction (S)-2,3,4,5-tetrahydrodipicolinate + succinyl-CoA + H2O = (S)-2-succinylamino-6-oxoheptanedioate + CoA. It functions in the pathway amino-acid biosynthesis; L-lysine biosynthesis via DAP pathway; LL-2,6-diaminopimelate from (S)-tetrahydrodipicolinate (succinylase route): step 1/3. In terms of biological role, catalyzes the conversion of the cyclic tetrahydrodipicolinate (THDP) into the acyclic N-succinyl-L-2-amino-6-oxopimelate using succinyl-CoA. The chain is 2,3,4,5-tetrahydropyridine-2,6-dicarboxylate N-succinyltransferase from Nitratiruptor sp. (strain SB155-2).